Here is a 37-residue protein sequence, read N- to C-terminus: Large ribosomal subunit protein bL36A (37 aa).

It belongs to the bacterial ribosomal protein bL36 family.

The sequence is that of Large ribosomal subunit protein bL36A from Methylobacillus flagellatus (strain ATCC 51484 / DSM 6875 / VKM B-1610 / KT).